Here is a 57-residue protein sequence, read N- to C-terminus: Large ribosomal subunit protein bL32 (57 aa).

Residues 1-16 (MAVQKSRKTPSRRGMR) are compositionally biased toward basic residues. A disordered region spans residues 1 to 37 (MAVQKSRKTPSRRGMRRSHDALSTTAITVDETTGELH). Residues 21–31 (ALSTTAITVDE) show a composition bias toward polar residues.

Belongs to the bacterial ribosomal protein bL32 family.

The protein is Large ribosomal subunit protein bL32 of Hydrogenovibrio crunogenus (strain DSM 25203 / XCL-2) (Thiomicrospira crunogena).